The sequence spans 62 residues: Keratin-associated protein 19-5 (62 aa).

A 14 X 2 AA repeats of G-[YCGS] region spans residues 5 to 56; the sequence is GSYYGGLGSGIRGFGNLGYGYGCGCGFGGYGYGSGYGRYGYGYPRPLYYGGY.

This sequence belongs to the KRTAP type 19 family. In terms of assembly, interacts with hair keratins. Expressed in skin during two hair growth cycles. Expression restricted to the cortical cells of hair follicles, appearing first in the cortical cells processing the flat nuclei located a few cells above the dermal papilla.

In terms of biological role, in the hair cortex, hair keratin intermediate filaments are embedded in an interfilamentous matrix, consisting of hair keratin-associated proteins (KRTAP), which are essential for the formation of a rigid and resistant hair shaft through their extensive disulfide bond cross-linking with abundant cysteine residues of hair keratins. The matrix proteins include the high-sulfur and high-glycine-tyrosine keratins. This chain is Keratin-associated protein 19-5 (Krtap19-5), found in Mus musculus (Mouse).